We begin with the raw amino-acid sequence, 322 residues long: Gas vesicle protein L (322 aa).

Residues 1-85 (MTEQSSGSAT…SEQATVDWST (85 aa)) form a disordered region. Residues 17 to 36 (ETAKQETGRKNEQPEERTVT) show a composition bias toward basic and acidic residues. The span at 45 to 57 (INTTTAESETGSE) shows a compositional bias: polar residues. Over residues 58 to 72 (QESKAGSEQESKAGS) the composition is skewed to basic and acidic residues. The span at 73–85 (EQESEQATVDWST) shows a compositional bias: polar residues.

The protein belongs to the gas vesicle GvpF/GvpL family. GvpF to GvpM interact with each other in vitro, and may form multi-subunit complex(es). Interacts with GvpC, GvpN and GvpO.

Its subcellular location is the gas vesicle. In terms of biological role, proteins GvpF to GvpM might be involved in nucleating gas vesicle formation. A minor component of the gas vesicle. Gas vesicles are small, hollow, gas filled protein structures that are found in several microbial planktonic microorganisms. They allow positioning of halobacteria at the optimal depth for growth in the poorly aerated, shallow brine pools of their habitat. Its function is as follows. Expression of a 9.5 kb mc-vac DNA fragment containing 2 divergently transcribed regions (gvpD-gvpE-gvpF-gvpG-gvpH-gvpI-gvpJ-gvpK-gvpL-gvpM and gvpA-gvpC-gvpN-gvpO) allows H.volcanii to produce gas vesicles. The polypeptide is Gas vesicle protein L (Haloferax mediterranei (strain ATCC 33500 / DSM 1411 / JCM 8866 / NBRC 14739 / NCIMB 2177 / R-4) (Halobacterium mediterranei)).